The chain runs to 477 residues: Acylamidase (477 aa).

Catalysis depends on charge relay system residues K82 and S157. Catalysis depends on S181, which acts as the Acyl-ester intermediate.

The protein belongs to the amidase family.

It carries out the reaction a monocarboxylic acid amide + H2O = a monocarboxylate + NH4(+). It catalyses the reaction an anilide + H2O = aniline + a carboxylate + H(+). The enzyme catalyses an N-acyl-L-amino acid + H2O = an L-alpha-amino acid + a carboxylate. The catalysed reaction is an N-acetyl-L-cysteine-S-conjugate + H2O = an S-substituted L-cysteine + acetate. Its activity is regulated as follows. Amidase activity is completely suppressed by inhibitors of serine proteases (phenylmethylsulfonyl fluoride and diisopropyl fluorophosphate), partially inhibited by copper and mercury ions, but is not affected by inhibitors of aliphatic amidases (acetaldehyde and nitrophenyl disulfides) or by EDTA. In terms of biological role, amidase with broad substrate specificity, catalyzing the hydrolysis of a wide range of N-substituted amides, and, to a lesser extent, the hydrolysis of non-substituted amides. Acid para-nitroanilides (4'-nitroacetanilide, Gly-pNA, Ala-pNA, Leu-pNA) are the best substrates for this enzyme. N-substituted acrylamides (isopropyl acrylamide, N,N-dimethyl-aminopropyl acrylamide, and methylene-bis-acrylamide), N-acetyl derivatives of glycine, alanine and leucine, and aliphatic amides (acetamide, acrylamide, isobutyramide, n-butyramide, and valeramide) can also be used as substrates but with less efficiency. This Rhodococcus erythropolis (Arthrobacter picolinophilus) protein is Acylamidase.